The following is a 541-amino-acid chain: Tyrosine-protein kinase Yes (541 aa).

Positions 1–10 (MGCIKSKENK) are enriched in basic and acidic residues. The disordered stretch occupies residues 1-29 (MGCIKSKENKSPAIKYTPENPTEPVNTSA). Gly2 carries the N-myristoyl glycine lipid modification. The S-palmitoyl cysteine; in membrane form moiety is linked to residue Cys3. Residues 19–29 (ENPTEPVNTSA) show a composition bias toward polar residues. The residue at position 32 (Tyr32) is a Phosphotyrosine. One can recognise an SH3 domain in the interval 89 to 150 (GGVTIFVALY…PSNYVAPADS (62 aa)). The SH2 domain occupies 156 to 253 (WYFGKMGRKD…GLCHKLTTVC (98 aa)). The region spanning 275–528 (LRLEVKLGQG…YIQSFLEDYF (254 aa)) is the Protein kinase domain. Residues 281 to 289 (LGQGCFGEV) and Lys303 contribute to the ATP site. Phosphotyrosine is present on residues Tyr334 and Tyr343. The Proton acceptor role is filled by Asp394. At Tyr424 the chain carries Phosphotyrosine; by autocatalysis. Tyr535 carries the post-translational modification Phosphotyrosine.

Interacts with YAP1 and CSF1R. Interacts with FASLG. Interacts with CTNND1; this interaction allows YES1-mediated activation of FYN and FER and subsequent phosphorylation of CTNND1. Interacts with IL6ST/gp130. Interacts with SCRIB, when YES1 is in a closed conformation; the interaction facilitates YES1 autophosphorylation. In terms of processing, phosphorylated. Phosphorylation by CSK on the C-terminal tail maintains the enzyme in an inactive state. Autophosphorylation at Tyr-424 maintains enzyme activity by blocking CSK-mediated inhibition. Post-translationally, palmitoylation at Cys-3 promotes membrane localization.

The protein localises to the cell membrane. Its subcellular location is the cytoplasm. It is found in the cytoskeleton. The protein resides in the microtubule organizing center. It localises to the centrosome. The protein localises to the cytosol. Its subcellular location is the cell junction. The enzyme catalyses L-tyrosyl-[protein] + ATP = O-phospho-L-tyrosyl-[protein] + ADP + H(+). Its function is as follows. Non-receptor protein tyrosine kinase that is involved in the regulation of cell growth and survival, apoptosis, cell-cell adhesion, cytoskeleton remodeling, and differentiation. Stimulation by receptor tyrosine kinases (RTKs) including EGFR, PDGFR, CSF1R and FGFR leads to recruitment of YES1 to the phosphorylated receptor, and activation and phosphorylation of downstream substrates. Upon EGFR activation, promotes the phosphorylation of PARD3 to favor epithelial tight junction assembly. Participates in the phosphorylation of specific junctional components such as CTNND1 by stimulating the FYN and FER tyrosine kinases at cell-cell contacts. Upon T-cell stimulation by CXCL12, phosphorylates collapsin response mediator protein 2/DPYSL2 and induces T-cell migration. Participates in CD95L/FASLG signaling pathway and mediates AKT-mediated cell migration. Plays a role in cell cycle progression by phosphorylating the cyclin dependent kinase 4/CDK4 thus regulating the G1 phase. Also involved in G2/M progression and cytokinesis. Catalyzes phosphorylation of organic cation transporter OCT2 which induces its transport activity. The chain is Tyrosine-protein kinase Yes (Yes1) from Rattus norvegicus (Rat).